We begin with the raw amino-acid sequence, 136 residues long: NADPH-dependent 7-cyano-7-deazaguanine reductase (136 aa).

The active-site Thioimide intermediate is the Cys-50. Catalysis depends on Asp-57, which acts as the Proton donor. Substrate contacts are provided by residues Tyr-72 to Leu-74 and His-91 to Glu-92.

The protein belongs to the GTP cyclohydrolase I family. QueF type 1 subfamily.

It is found in the cytoplasm. It catalyses the reaction 7-aminomethyl-7-carbaguanine + 2 NADP(+) = 7-cyano-7-deazaguanine + 2 NADPH + 3 H(+). It participates in tRNA modification; tRNA-queuosine biosynthesis. Functionally, catalyzes the NADPH-dependent reduction of 7-cyano-7-deazaguanine (preQ0) to 7-aminomethyl-7-deazaguanine (preQ1). The protein is NADPH-dependent 7-cyano-7-deazaguanine reductase of Prochlorococcus marinus (strain MIT 9301).